We begin with the raw amino-acid sequence, 22 residues long: Magnificalysin II (22 aa).

Residues 3–12 (ALAGTIIDGA) form a plays an important role in the hemolytic activity region. The N-terminal region stretch occupies residues 11–22 (GASLGFDILNKV).

Belongs to the actinoporin family. Sea anemone subfamily. As to quaternary structure, octamer or nonamer in membranes. Monomer in the soluble state.

It is found in the secreted. The protein resides in the nematocyst. It localises to the target cell membrane. Pore-forming protein that forms cations-selective hydrophilic pores of around 1 nm and causes cytolysis. Pore formation is a multi-step process that involves specific recognition of membrane sphingomyelin (but neither cholesterol nor phosphatidylcholine) using aromatic rich region and adjacent phosphocholine (POC) binding site, firm binding to the membrane (mainly driven by hydrophobic interactions) accompanied by the transfer of the N-terminal region to the lipid-water interface and finally pore formation after oligomerization of monomers. This Heteractis magnifica (Magnificent sea anemone) protein is Magnificalysin II.